The primary structure comprises 211 residues: BAG family molecular chaperone regulator 2 (211 aa).

A2 is modified (N-acetylalanine). Phosphoserine occurs at positions 20, 31, and 73. The stretch at 20–61 (SMADRSSRLLESLDQLELRVEALREAATAVEQEKEVLLEMIH) forms a coiled coil. Residues 109 to 189 (SLKHATRIID…NIENADKAIK (81 aa)) enclose the BAG domain.

In terms of assembly, binds to the ATPase domain of HSP/HSC70 chaperones. May interact with NWD1. Interacts with HSPA1A (via NBD), HSPA1B (via NBD) and HSPA8. May interact with DNJC9; the interaction seems to be histone-dependent.

Functionally, co-chaperone for HSP70 and HSC70 chaperone proteins. Acts as a nucleotide-exchange factor (NEF) promoting the release of ADP from the HSP70 and HSC70 proteins thereby triggering client/substrate protein release. This is BAG family molecular chaperone regulator 2 from Bos taurus (Bovine).